The chain runs to 980 residues: Valine--tRNA ligase (980 aa).

The 'HIGH' region motif lies at 43 to 53; sequence PNVTGTLHMGH. The short motif at 586–590 is the 'KMSKS' region element; sequence KMSKS. Lys589 lines the ATP pocket. Positions 914-980 form a coiled coil; that stretch reads LVDMDAERMR…AGLREQRGKL (67 aa).

This sequence belongs to the class-I aminoacyl-tRNA synthetase family. ValS type 1 subfamily. Monomer.

Its subcellular location is the cytoplasm. The enzyme catalyses tRNA(Val) + L-valine + ATP = L-valyl-tRNA(Val) + AMP + diphosphate. Functionally, catalyzes the attachment of valine to tRNA(Val). As ValRS can inadvertently accommodate and process structurally similar amino acids such as threonine, to avoid such errors, it has a 'posttransfer' editing activity that hydrolyzes mischarged Thr-tRNA(Val) in a tRNA-dependent manner. This is Valine--tRNA ligase from Xanthomonas oryzae pv. oryzae (strain PXO99A).